Reading from the N-terminus, the 74-residue chain is Putative membrane protein insertion efficiency factor (74 aa).

Belongs to the UPF0161 family.

It is found in the cell inner membrane. Could be involved in insertion of integral membrane proteins into the membrane. In Anaeromyxobacter sp. (strain Fw109-5), this protein is Putative membrane protein insertion efficiency factor.